Here is a 98-residue protein sequence, read N- to C-terminus: Cytochrome b (98 aa).

3 helical membrane passes run 1-18, 42-63, and 78-98; these read LLGL…FLAM, WLIR…YLHV, and WNIG…GYVL. Heme b-binding residues include histidine 48 and histidine 62.

This sequence belongs to the cytochrome b family. In terms of assembly, the cytochrome bc1 complex contains 3 respiratory subunits (MT-CYB, CYC1 and UQCRFS1), 2 core proteins (UQCRC1 and UQCRC2) and probably 6 low-molecular weight proteins. It depends on heme b as a cofactor.

It localises to the mitochondrion inner membrane. In terms of biological role, component of the ubiquinol-cytochrome c reductase complex (complex III or cytochrome b-c1 complex) that is part of the mitochondrial respiratory chain. The b-c1 complex mediates electron transfer from ubiquinol to cytochrome c. Contributes to the generation of a proton gradient across the mitochondrial membrane that is then used for ATP synthesis. In Scaphirhynchus platorynchus (Shovelnose sturgeon), this protein is Cytochrome b (mt-cyb).